A 260-amino-acid chain; its full sequence is Thiazole synthase (260 aa).

K100 (schiff-base intermediate with DXP) is an active-site residue. 1-deoxy-D-xylulose 5-phosphate-binding positions include G161, 187–188 (AG), and 209–210 (NT).

Belongs to the ThiG family. Homotetramer. Forms heterodimers with either ThiH or ThiS.

It is found in the cytoplasm. It carries out the reaction [ThiS sulfur-carrier protein]-C-terminal-Gly-aminoethanethioate + 2-iminoacetate + 1-deoxy-D-xylulose 5-phosphate = [ThiS sulfur-carrier protein]-C-terminal Gly-Gly + 2-[(2R,5Z)-2-carboxy-4-methylthiazol-5(2H)-ylidene]ethyl phosphate + 2 H2O + H(+). Its pathway is cofactor biosynthesis; thiamine diphosphate biosynthesis. Catalyzes the rearrangement of 1-deoxy-D-xylulose 5-phosphate (DXP) to produce the thiazole phosphate moiety of thiamine. Sulfur is provided by the thiocarboxylate moiety of the carrier protein ThiS. In vitro, sulfur can be provided by H(2)S. The chain is Thiazole synthase from Sorangium cellulosum (strain So ce56) (Polyangium cellulosum (strain So ce56)).